The chain runs to 111 residues: Nucleoid-associated protein CYA_1369 (111 aa).

The protein belongs to the YbaB/EbfC family. Homodimer.

Its subcellular location is the cytoplasm. It is found in the nucleoid. In terms of biological role, binds to DNA and alters its conformation. May be involved in regulation of gene expression, nucleoid organization and DNA protection. This is Nucleoid-associated protein CYA_1369 from Synechococcus sp. (strain JA-3-3Ab) (Cyanobacteria bacterium Yellowstone A-Prime).